The chain runs to 593 residues: Arylsulfatase D (593 aa).

An N-terminal signal peptide occupies residues 1 to 33 (MRSAARRGRAAPAARDSLPVLLFLCLLLKTCEP). 2 residues coordinate Ca(2+): Asp49 and Asp50. A glycan (N-linked (GlcNAc...) asparagine) is linked at Asn61. Cys89 lines the Ca(2+) pocket. Cys89 (nucleophile) is an active-site residue. 3-oxoalanine (Cys) is present on Cys89. N-linked (GlcNAc...) asparagine glycosylation is present at Asn128. Lys148 is a substrate binding site. His150 is an active-site residue. His304 contributes to the substrate binding site. An N-linked (GlcNAc...) asparagine glycan is attached at Asn347. Ca(2+) is bound by residues Asp356 and His357. Residue Lys381 participates in substrate binding.

The protein belongs to the sulfatase family. Ca(2+) serves as cofactor. Post-translationally, the conversion to 3-oxoalanine (also known as C-formylglycine, FGly), of a serine or cysteine residue in prokaryotes and of a cysteine residue in eukaryotes, is critical for catalytic activity. Expressed in the pancreas, kidney, liver, lung, placenta, brain and heart.

Its subcellular location is the lysosome. The protein is Arylsulfatase D (ARSD) of Homo sapiens (Human).